Consider the following 327-residue polypeptide: Beta-ketoacyl-[acyl-carrier-protein] synthase III 2 (327 aa).

Catalysis depends on residues cysteine 114 and histidine 251. The interval serine 252–arginine 256 is ACP-binding. The active site involves asparagine 281.

Belongs to the thiolase-like superfamily. FabH family. As to quaternary structure, homodimer.

The protein localises to the cytoplasm. It catalyses the reaction malonyl-[ACP] + acetyl-CoA + H(+) = 3-oxobutanoyl-[ACP] + CO2 + CoA. It functions in the pathway lipid metabolism; fatty acid biosynthesis. In terms of biological role, catalyzes the condensation reaction of fatty acid synthesis by the addition to an acyl acceptor of two carbons from malonyl-ACP. Catalyzes the first condensation reaction which initiates fatty acid synthesis and may therefore play a role in governing the total rate of fatty acid production. Possesses both acetoacetyl-ACP synthase and acetyl transacylase activities. Its substrate specificity determines the biosynthesis of branched-chain and/or straight-chain of fatty acids. The polypeptide is Beta-ketoacyl-[acyl-carrier-protein] synthase III 2 (Bacillus anthracis).